The sequence spans 509 residues: Maturase K (509 aa).

Belongs to the intron maturase 2 family. MatK subfamily.

It localises to the plastid. The protein resides in the chloroplast. Its function is as follows. Usually encoded in the trnK tRNA gene intron. Probably assists in splicing its own and other chloroplast group II introns. This is Maturase K from Dalea purpurea (Violet prairie clover).